Reading from the N-terminus, the 69-residue chain is uncharacterized protein (69 aa).

Residues leucine 21 to lysine 64 adopt a coiled-coil conformation.

This is an uncharacterized protein from Saccharomyces cerevisiae (strain ATCC 204508 / S288c) (Baker's yeast).